The sequence spans 63 residues: Large ribosomal subunit protein bL28 (63 aa).

It belongs to the bacterial ribosomal protein bL28 family.

This Acidobacterium capsulatum (strain ATCC 51196 / DSM 11244 / BCRC 80197 / JCM 7670 / NBRC 15755 / NCIMB 13165 / 161) protein is Large ribosomal subunit protein bL28.